Reading from the N-terminus, the 100-residue chain is Omega toxin Ap2 (100 aa).

Residues 1-22 form the signal peptide; it reads MNTTQVILFAVVLVLTVTVGQA. A propeptide spanning residues 23–57 is cleaved from the precursor; the sequence is DEDSAETSLLRKLEEAEASMFGQYLEESKNSPEQR. Disulfide bonds link C58-C74, C65-C79, and C73-C94. S99 is subject to Serine amide.

This sequence belongs to the neurotoxin 14 (magi-1) family. 08 (Ltx-4) subfamily. Expressed by the venom duct.

It localises to the secreted. Functionally, inhibits 31.17% of Cav2.1/CACNA1A current at 1 uM concentration. The sequence is that of Omega toxin Ap2 from Acanthoscurria paulensis (Brazilian giant black tarantula spider).